A 543-amino-acid chain; its full sequence is Cytochrome P450 monooxygenase 205 (543 aa).

A helical membrane pass occupies residues 9–29 (LISLGVAALAVAVWKAIVMVI). 2 N-linked (GlcNAc...) asparagine glycosylation sites follow: N332 and N434. Heme is bound at residue C479.

The protein belongs to the cytochrome P450 family. The cofactor is heme.

The protein localises to the membrane. The protein operates within secondary metabolite biosynthesis. In terms of biological role, cytochrome P450 monooxygenase that is able to use carbazole and phenanthrene as substrates for oxidation. The sequence is that of Cytochrome P450 monooxygenase 205 from Postia placenta (strain ATCC 44394 / Madison 698-R) (Brown rot fungus).